The following is a 471-amino-acid chain: Galactolipase DONGLE, chloroplastic (471 aa).

Residues 1-88 (MAAKVFTQNP…PLSRVWREIQ (88 aa)) constitute a chloroplast transit peptide. The interval 44–71 (SSSTMSPPISSSPLSLPSSSSSQAIPPS) is disordered. The GXSXG signature appears at 284-288 (GHSMG). Catalysis depends on Ser286, which acts as the Acyl-ester intermediate. Active-site charge relay system residues include Asp349 and His400.

The protein belongs to the AB hydrolase superfamily. Lipase family. In terms of tissue distribution, expressed in leaves and seedlings. Not detected in flowers, siliques or roots.

Its subcellular location is the plastid. It localises to the chloroplast. The catalysed reaction is a 1,2-diacyl-3-O-(beta-D-galactosyl)-sn-glycerol + 2 H2O = 3-beta-D-galactosyl-sn-glycerol + 2 a fatty acid + 2 H(+). The enzyme catalyses a 1,2-diacyl-sn-glycero-3-phosphocholine + H2O = a 2-acyl-sn-glycero-3-phosphocholine + a fatty acid + H(+). It catalyses the reaction a 1,2-diacyl-3-O-[alpha-D-galactosyl-(1-&gt;6)-beta-D-galactosyl]-sn-glycerol + H2O = acyl-3-O-[alpha-D-galactosyl-(1-&gt;6)-beta-D-galactosyl]-sn-glycerol + a fatty acid + H(+). Sn-1-specific phospholipase that releases free fatty acids from phosphatidylcholine. Has a higher galactolipase activity than phospholipase A1 activity when digalactosyldiacylglycerol (DGDG) is used as substrate. Catalyzes the initial step of jasmonic acid biosynthesis. Required for the biosynthesis of basal-level endogenous jasmonate in vegetative tissues. Regulates leaves growth. Not essential for jasmonate biosynthesis after wounding or upon pathogen infection. This Arabidopsis thaliana (Mouse-ear cress) protein is Galactolipase DONGLE, chloroplastic.